Reading from the N-terminus, the 272-residue chain is MLLAIDVRNTHTVVGLLSGAKQHAKVVQQWRIRTESEVTADELALTIDGLIGEDSERLTGATGLSTVPSVLHEVRIMLEQYWPSVPHVLIEPGVRTGIPLLVDNPKEVGADRIVNCLAAYQQFAKAAIVVDFGSSICVDVVSAKGEFLGGAIAPGVQVSSDAAAARSAALRRVELARPRSVVGKNTVECMQAGAVFGFAGLVDGLVARIREDVKGFSADDDVAVVATGHTAPLLLPELHSVEHFDEHLTLHGLRLVFERNREAQRGRLKPAR.

6 to 13 contacts ATP; that stretch reads DVRNTHTV. 109 to 112 is a substrate binding site; it reads GADR. The active-site Proton acceptor is Asp111. A K(+)-binding site is contributed by Asp131. Residue Ser134 coordinates ATP. Thr186 serves as a coordination point for substrate.

The protein belongs to the type III pantothenate kinase family. Homodimer. It depends on NH4(+) as a cofactor. K(+) is required as a cofactor.

The protein resides in the cytoplasm. It carries out the reaction (R)-pantothenate + ATP = (R)-4'-phosphopantothenate + ADP + H(+). Its pathway is cofactor biosynthesis; coenzyme A biosynthesis; CoA from (R)-pantothenate: step 1/5. Its function is as follows. Catalyzes the phosphorylation of pantothenate (Pan), the first step in CoA biosynthesis. In Mycobacterium marinum (strain ATCC BAA-535 / M), this protein is Type III pantothenate kinase.